The primary structure comprises 272 residues: Alkaline ceramidase (272 aa).

The next 2 membrane-spanning stretches (helical) occupy residues 34-54 and 61-81; these read FANTCTNLPIIVLPLVNIMLL and VNGGLIFPQLLLTFNGLASTY. His83 contributes to the Zn(2+) binding site. 4 consecutive transmembrane segments (helical) span residues 96 to 116, 124 to 144, 148 to 168, and 183 to 203; these read LSLVWIITVFLVVYIPVMKWF, LTLVRWVVLIVTALVSGLCFL, LNAIALMLFSIPAAVVINYEG, and ILALWGVAFSFWFADRLLCDF. His213 and His217 together coordinate Zn(2+). A helical transmembrane segment spans residues 214-234; sequence ALFHLLAGLAGYTIFIMFSMI. Asn256 carries N-linked (GlcNAc...) asparagine glycosylation.

Belongs to the alkaline ceramidase family. It depends on Zn(2+) as a cofactor.

It is found in the membrane. The enzyme catalyses an N-acyl-sphingoid base + H2O = a sphingoid base + a fatty acid. It catalyses the reaction an N-acylsphing-4-enine + H2O = sphing-4-enine + a fatty acid. It carries out the reaction an N-acyl-15-methylhexadecasphing-4-enine + H2O = 15-methylhexadecasphing-4-enine + a fatty acid. The protein operates within lipid metabolism; sphingolipid metabolism. Functionally, hydrolyzes the sphingolipid ceramide into sphingoid base and free fatty acid. C.elegans contain specific sphingoid bases, which are unique or different in structure compared to the sphingoid bases found in other animals. Two examples of these distinctive compounds are: 15-methylhexadecasphinganine and 15-methylhexadecasphing-4-enine. The sequence is that of Alkaline ceramidase from Caenorhabditis elegans.